The sequence spans 528 residues: Phosphoenolpyruvate carboxykinase (ATP) (528 aa).

Arg56, Tyr192, and Lys198 together coordinate substrate. Residues Lys198, His217, and 233–241 each bind ATP; that span reads GLSGTGKTT. Positions 198 and 217 each coordinate Mn(2+). Asp254 provides a ligand contact to Mn(2+). ATP is bound by residues Glu282, Arg319, and Thr444. Arg319 lines the substrate pocket.

It belongs to the phosphoenolpyruvate carboxykinase (ATP) family. Requires Mn(2+) as cofactor.

Its subcellular location is the cytoplasm. The enzyme catalyses oxaloacetate + ATP = phosphoenolpyruvate + ADP + CO2. The protein operates within carbohydrate biosynthesis; gluconeogenesis. Its function is as follows. Involved in the gluconeogenesis. Catalyzes the conversion of oxaloacetate (OAA) to phosphoenolpyruvate (PEP) through direct phosphoryl transfer between the nucleoside triphosphate and OAA. This chain is Phosphoenolpyruvate carboxykinase (ATP), found in Bacillus cereus (strain G9842).